The sequence spans 233 residues: MARRPDLKTGPARLAALVRTSVPPMHPAGLPFVGASLAVALAGRKSRWLRNAGVASAAANAAFFRHPPRTPPTRPGVVVAPADGLICLIEEAVPPSELRLPATPLPRISIFLSLLDAHVQRAPLGGEVIAVEHRPGLFGSADLAAASADNERNSIVIRSPEGAEVIAVQIAGLLARRIVCDVEPGDTVGLGDTYGLIRYGSRLDTYLPAGSDILVDVGQRTLAGETVLAELPR.

Catalysis depends on serine 201, which acts as the Schiff-base intermediate with substrate; via pyruvic acid. Position 201 is a pyruvic acid (Ser); by autocatalysis (serine 201).

It belongs to the phosphatidylserine decarboxylase family. PSD-A subfamily. Heterodimer of a large membrane-associated beta subunit and a small pyruvoyl-containing alpha subunit. The cofactor is pyruvate. Post-translationally, is synthesized initially as an inactive proenzyme. Formation of the active enzyme involves a self-maturation process in which the active site pyruvoyl group is generated from an internal serine residue via an autocatalytic post-translational modification. Two non-identical subunits are generated from the proenzyme in this reaction, and the pyruvate is formed at the N-terminus of the alpha chain, which is derived from the carboxyl end of the proenzyme. The post-translation cleavage follows an unusual pathway, termed non-hydrolytic serinolysis, in which the side chain hydroxyl group of the serine supplies its oxygen atom to form the C-terminus of the beta chain, while the remainder of the serine residue undergoes an oxidative deamination to produce ammonia and the pyruvoyl prosthetic group on the alpha chain.

The protein localises to the cell membrane. It catalyses the reaction a 1,2-diacyl-sn-glycero-3-phospho-L-serine + H(+) = a 1,2-diacyl-sn-glycero-3-phosphoethanolamine + CO2. It functions in the pathway phospholipid metabolism; phosphatidylethanolamine biosynthesis; phosphatidylethanolamine from CDP-diacylglycerol: step 2/2. Catalyzes the formation of phosphatidylethanolamine (PtdEtn) from phosphatidylserine (PtdSer). This Mycolicibacterium vanbaalenii (strain DSM 7251 / JCM 13017 / BCRC 16820 / KCTC 9966 / NRRL B-24157 / PYR-1) (Mycobacterium vanbaalenii) protein is Phosphatidylserine decarboxylase proenzyme.